A 461-amino-acid chain; its full sequence is ATP synthase subunit beta 2 (461 aa).

151–158 provides a ligand contact to ATP; sequence GGAGVGKT.

It belongs to the ATPase alpha/beta chains family. F-type ATPases have 2 components, CF(1) - the catalytic core - and CF(0) - the membrane proton channel. CF(1) has five subunits: alpha(3), beta(3), gamma(1), delta(1), epsilon(1). CF(0) has three main subunits: a(1), b(2) and c(9-12). The alpha and beta chains form an alternating ring which encloses part of the gamma chain. CF(1) is attached to CF(0) by a central stalk formed by the gamma and epsilon chains, while a peripheral stalk is formed by the delta and b chains.

It localises to the cell inner membrane. It catalyses the reaction ATP + H2O + 4 H(+)(in) = ADP + phosphate + 5 H(+)(out). Functionally, produces ATP from ADP in the presence of a proton gradient across the membrane. The catalytic sites are hosted primarily by the beta subunits. The sequence is that of ATP synthase subunit beta 2 from Photobacterium profundum (strain SS9).